A 97-amino-acid polypeptide reads, in one-letter code: Exodeoxyribonuclease 7 small subunit (97 aa).

Positions Met-1–Asn-22 are disordered.

It belongs to the XseB family. In terms of assembly, heterooligomer composed of large and small subunits.

The protein resides in the cytoplasm. It catalyses the reaction Exonucleolytic cleavage in either 5'- to 3'- or 3'- to 5'-direction to yield nucleoside 5'-phosphates.. Bidirectionally degrades single-stranded DNA into large acid-insoluble oligonucleotides, which are then degraded further into small acid-soluble oligonucleotides. This Burkholderia ambifaria (strain MC40-6) protein is Exodeoxyribonuclease 7 small subunit.